The primary structure comprises 266 residues: Small ribosomal subunit protein uS3 (266 aa).

The KH type-2 domain occupies 39–107; the sequence is VREYLKKKLK…PVHVNIEEIR (69 aa). Residues 214–266 form a disordered region; the sequence is PVVEEVTEDKRPRRNARPGDRRPRRDGEGGAPGARRGGPRRGAGKPEDGKTGE. Composition is skewed to basic and acidic residues over residues 230–241 and 257–266; these read RPGDRRPRRDGE and GKPEDGKTGE.

This sequence belongs to the universal ribosomal protein uS3 family. Part of the 30S ribosomal subunit. Forms a tight complex with proteins S10 and S14.

In terms of biological role, binds the lower part of the 30S subunit head. Binds mRNA in the 70S ribosome, positioning it for translation. The protein is Small ribosomal subunit protein uS3 of Burkholderia thailandensis (strain ATCC 700388 / DSM 13276 / CCUG 48851 / CIP 106301 / E264).